Here is a 74-residue protein sequence, read N- to C-terminus: Guanine nucleotide-binding protein G(T) subunit gamma-T1 (74 aa).

A Cysteine methyl ester modification is found at C71. C71 carries S-farnesyl cysteine lipidation. A propeptide spans 72–74 (VIS) (removed in mature form).

It belongs to the G protein gamma family. As to quaternary structure, g proteins are composed of 3 units, alpha, beta and gamma. In terms of tissue distribution, retinal rod outer segment.

It is found in the cell membrane. Guanine nucleotide-binding proteins (G proteins) are involved as a modulator or transducer in various transmembrane signaling systems. The beta and gamma chains are required for the GTPase activity, for replacement of GDP by GTP, and for G protein-effector interaction. This chain is Guanine nucleotide-binding protein G(T) subunit gamma-T1 (GNGT1), found in Bos taurus (Bovine).